The chain runs to 212 residues: Large ribosomal subunit protein uL3 (212 aa).

Q153 is subject to N5-methylglutamine.

The protein belongs to the universal ribosomal protein uL3 family. In terms of assembly, part of the 50S ribosomal subunit. Forms a cluster with proteins L14 and L19. Methylated by PrmB.

Functionally, one of the primary rRNA binding proteins, it binds directly near the 3'-end of the 23S rRNA, where it nucleates assembly of the 50S subunit. The protein is Large ribosomal subunit protein uL3 of Shewanella sediminis (strain HAW-EB3).